We begin with the raw amino-acid sequence, 401 residues long: Tumor necrosis factor receptor superfamily member 11B (401 aa).

An N-terminal signal peptide occupies residues 1 to 21; that stretch reads MNNLLCCALVFLDISIKWTTQ. 4 TNFR-Cys repeats span residues 24–62, 65–105, 107–142, and 145–185; these read FPPKYLHYDEETSHQLLCDKCPPGTYLKQHCTAKWKTVC, CPDH…NRVC, CKEGRYLEIEFCLKHRSCPPGFGVVQAGTPERNTVC, and CPDG…DNIC. 8 disulfides stabilise this stretch: Cys-41–Cys-54, Cys-44–Cys-62, Cys-65–Cys-80, Cys-83–Cys-97, Cys-87–Cys-105, Cys-107–Cys-118, Cys-124–Cys-142, and Cys-145–Cys-160. Asn-98 carries N-linked (GlcNAc...) asparagine glycosylation. N-linked (GlcNAc...) asparagine glycosylation is found at Asn-152, Asn-165, and Asn-178. A disulfide bridge links Cys-166 with Cys-185. Death domains follow at residues 198-269 and 270-365; these read DVTL…IVKK and IIQD…TQSL. A glycan (N-linked (GlcNAc...) asparagine) is linked at Asn-289.

As to quaternary structure, homodimer. Interacts with TNFSF10 and TNFSF11. Post-translationally, N-glycosylated. Contains sialic acid residues. The N-terminus is blocked. As to expression, highly expressed in adult lung, heart, kidney, liver, spleen, thymus, prostate, ovary, small intestine, thyroid, lymph node, trachea, adrenal gland, testis, and bone marrow. Detected at very low levels in brain, placenta and skeletal muscle. Highly expressed in fetal kidney, liver and lung.

The protein resides in the secreted. Functionally, acts as a decoy receptor for TNFSF11/RANKL and thereby neutralizes its function in osteoclastogenesis. Inhibits the activation of osteoclasts and promotes osteoclast apoptosis in vitro. Bone homeostasis seems to depend on the local ratio between TNFSF11 and TNFRSF11B. May also play a role in preventing arterial calcification. May act as decoy receptor for TNFSF10/TRAIL and protect against apoptosis. TNFSF10/TRAIL binding blocks the inhibition of osteoclastogenesis. This is Tumor necrosis factor receptor superfamily member 11B (TNFRSF11B) from Homo sapiens (Human).